Here is a 407-residue protein sequence, read N- to C-terminus: Phosphoglycerate kinase (407 aa).

Residues 24 to 26, Arg40, 63 to 66, Arg121, and Arg154 contribute to the substrate site; these read DFN and HLGR. Residues Lys205, Glu337, and 363–366 each bind ATP; that span reads GGDS.

The protein belongs to the phosphoglycerate kinase family. In terms of assembly, monomer.

It is found in the cytoplasm. It carries out the reaction (2R)-3-phosphoglycerate + ATP = (2R)-3-phospho-glyceroyl phosphate + ADP. Its pathway is carbohydrate degradation; glycolysis; pyruvate from D-glyceraldehyde 3-phosphate: step 2/5. In Gloeobacter violaceus (strain ATCC 29082 / PCC 7421), this protein is Phosphoglycerate kinase.